The primary structure comprises 137 residues: MARTILAFDFGTYSIGCAVGQDITGTAQGLPSFKAQDGIPNWDQIEKVIKEWQPERLVVGLPLNMDGTEQPLTQRAKKFANRLNGRFNLPVELQDERLTTVSAKAEIFERGGYKALKKDKVDSISACLILESWFEAQ.

This sequence belongs to the YqgF nuclease family.

The protein resides in the cytoplasm. In terms of biological role, could be a nuclease involved in processing of the 5'-end of pre-16S rRNA. In Actinobacillus pleuropneumoniae serotype 7 (strain AP76), this protein is Putative pre-16S rRNA nuclease.